An 84-amino-acid chain; its full sequence is MAQTQSPLQWLATTLIRGYQVFISPILGPRCRFNPTCSHYAIEAIKVHGTAKGCWFALKRILKCHPLHPGGSDPVPPKNDRCNK.

Belongs to the UPF0161 family.

The protein resides in the cell inner membrane. Could be involved in insertion of integral membrane proteins into the membrane. The sequence is that of Putative membrane protein insertion efficiency factor from Shewanella baltica (strain OS195).